A 382-amino-acid chain; its full sequence is Pectinesterase (382 aa).

A signal peptide spans 1–16 (MKIIVLLLLAVVLASA). Cys-153 and Cys-164 are oxidised to a cystine. An N-linked (GlcNAc...) asparagine glycan is attached at Asn-179. Residue Gln-193 coordinates substrate. Asp-216 acts as the Proton donor in catalysis. Asp-242 acts as the Nucleophile in catalysis. Residues Arg-306 and Trp-308 each contribute to the substrate site. Asn-340 and Asn-376 each carry an N-linked (GlcNAc...) asparagine glycan.

Belongs to the pectinesterase family. As to expression, expressed throughout the midgut with particularly strong expression in the ventriculus.

The protein localises to the secreted. It catalyses the reaction [(1-&gt;4)-alpha-D-galacturonosyl methyl ester](n) + n H2O = [(1-&gt;4)-alpha-D-galacturonosyl](n) + n methanol + n H(+). It functions in the pathway glycan metabolism; pectin degradation; 2-dehydro-3-deoxy-D-gluconate from pectin: step 1/5. Its function is as follows. Pectinesterase which probably plays an important role in the digestion of plant cell walls. The chain is Pectinesterase from Sitophilus oryzae (Rice weevil).